We begin with the raw amino-acid sequence, 137 residues long: MGVLAAAARCLVRGADRMSKWTSKRGPRSFRGRKGRGAKGIGFLTSGWRFVQIKEMVPEFVVPDLTGFKLKPYVSYLAPESEETPLTAAQLFSEAVAPAIEKDFKDGTFDPDNLEKYGFEPTQEGKLFQLYPRNFLR.

A mitochondrion-targeting transit peptide spans 1–13 (MGVLAAAARCLVR).

Belongs to the mitochondrion-specific ribosomal protein mL41 family. As to quaternary structure, component of the mitochondrial large ribosomal subunit (mt-LSU). Mature mammalian 55S mitochondrial ribosomes consist of a small (28S) and a large (39S) subunit. The 28S small subunit contains a 12S ribosomal RNA (12S mt-rRNA) and 30 different proteins. The 39S large subunit contains a 16S rRNA (16S mt-rRNA), a copy of mitochondrial valine transfer RNA (mt-tRNA(Val)), which plays an integral structural role, and 52 different proteins. Interacts with BCL2. As to expression, present in kidney, liver, thymus and testis, and at lower level in brain and spleen (at protein level).

It localises to the mitochondrion. In terms of biological role, component of the mitochondrial ribosome large subunit. Also involved in apoptosis and cell cycle. Enhances p53/TP53 stability, thereby contributing to p53/TP53-induced apoptosis in response to growth-inhibitory condition. Enhances p53/TP53 translocation to the mitochondria. Has the ability to arrest the cell cycle at the G1 phase, possibly by stabilizing the CDKN1A and CDKN1B (p27Kip1) proteins. In Homo sapiens (Human), this protein is Large ribosomal subunit protein mL41 (MRPL41).